The sequence spans 134 residues: Probable glycine cleavage system H protein (134 aa).

In terms of domain architecture, Lipoyl-binding spans 29–110 (TVLVGISDYA…PYENWIAKLK (82 aa)). Lys70 is modified (N6-lipoyllysine).

Belongs to the GcvH family. As to quaternary structure, the glycine cleavage system is composed of four proteins: P, T, L and H. Requires (R)-lipoate as cofactor.

Its function is as follows. The glycine cleavage system catalyzes the degradation of glycine. The H protein shuttles the methylamine group of glycine from the P protein to the T protein. The sequence is that of Probable glycine cleavage system H protein from Thermococcus kodakarensis (strain ATCC BAA-918 / JCM 12380 / KOD1) (Pyrococcus kodakaraensis (strain KOD1)).